The primary structure comprises 111 residues: Universal stress protein B (111 aa).

The next 2 membrane-spanning stretches (helical) occupy residues 1 to 21 and 90 to 110; these read MIST…NMAR and FILT…LILW.

Belongs to the universal stress protein B family.

The protein resides in the cell inner membrane. In Yersinia enterocolitica serotype O:8 / biotype 1B (strain NCTC 13174 / 8081), this protein is Universal stress protein B.